The chain runs to 345 residues: DNA N(6)-methyladenine demethylase ALKBH1A (345 aa).

Residues tryptophan 179 and 186–188 (FDW) each bind substrate. Positions 225-345 (RPEGAIVNYF…RININIRQVF (121 aa)) constitute a Fe2OG dioxygenase domain. 232–234 (NYF) is a binding site for 2-oxoglutarate. Residues histidine 243, aspartate 245, and histidine 299 each contribute to the Fe cation site. 336–342 (RININIR) serves as a coordination point for 2-oxoglutarate.

Belongs to the alkB family. It depends on Fe(2+) as a cofactor. In terms of tissue distribution, mostly expressed in siliques, to a lower extent in roots, seedlings and rosette leaves, but barely in cauline leaves, stems and flowers.

It is found in the nucleus. The protein resides in the cytoplasm. The catalysed reaction is an N(6)-methyl-2'-deoxyadenosine in DNA + 2-oxoglutarate + O2 = a 2'-deoxyadenosine in DNA + formaldehyde + succinate + CO2. Functionally, dioxygenase that catalyzes DNA N(6)-methyladenine (6 mA) demethylation to modulate gene expression and regulate seed germination. The chain is DNA N(6)-methyladenine demethylase ALKBH1A from Arabidopsis thaliana (Mouse-ear cress).